Consider the following 141-residue polypeptide: Putative inactive deoxyuridine 5'-triphosphate nucleotidohydrolase-like protein FLJ16323 (141 aa).

Belongs to the dUTPase family.

The chain is Putative inactive deoxyuridine 5'-triphosphate nucleotidohydrolase-like protein FLJ16323 from Homo sapiens (Human).